We begin with the raw amino-acid sequence, 200 residues long: Glutathione S-transferase 1-1 (200 aa).

The region spanning glycine 1–aspartate 73 is the GST N-terminal domain. Glutathione is bound by residues serine 2, histidine 43–isoleucine 45, and glutamate 57–arginine 59. The region spanning cysteine 79–phenylalanine 200 is the GST C-terminal domain.

The protein belongs to the GST superfamily. Theta family. As to quaternary structure, homodimer.

It carries out the reaction RX + glutathione = an S-substituted glutathione + a halide anion + H(+). The enzyme catalyses 1,1,1-trichloro-2,2-bis(4-chlorophenyl)ethane = 1,1-dichloro-2,2-bis(4-chlorophenyl)ethylene + chloride + H(+). Conjugation of reduced glutathione to a wide number of exogenous and endogenous hydrophobic electrophiles. Has DDT dehydrochlorinase activity. The sequence is that of Glutathione S-transferase 1-1 (GstD1) from Drosophila mauritiana (Fruit fly).